The primary structure comprises 385 residues: dTDP-4-dehydro-2,3,6-trideoxy-D-glucose 4-aminotransferase (385 aa).

The residue at position 182 (Lys182) is an N6-(pyridoxal phosphate)lysine.

It belongs to the DegT/DnrJ/EryC1 family. In terms of assembly, homodimer. Pyridoxal 5'-phosphate serves as cofactor.

It catalyses the reaction dTDP-4-amino-2,3,4,6-tetradeoxy-alpha-D-erythro-hexopyranose + 2-oxoglutarate = dTDP-4-dehydro-2,3,6-trideoxy-alpha-D-hexopyranose + L-glutamate. Involved in the biosynthesis of forosamine ((4-dimethylamino)-2,3,4,6-tetradeoxy-alpha-D-threo-hexopyranose), a highly deoxygenated sugar component of several bioactive natural products such as the insecticidal spinosyns A and D. In the presence of pyridoxal 5'-phosphate (PLP) and alpha-ketoglutarate, catalyzes the C-4 transamination of dTDP-4-keto-2,3,6-trideoxy-alpha-D-glucose to yield dTDP-4-amino-2,3,4,6-tetradeoxy-alpha-D-glucose. It can also use pyruvate, but less efficiently than alpha-ketoglutarate. Also able to catalyze the C-4 transamination of dTDP-4-keto-2,6-dideoxy-alpha-D-glucose to yield dTDP-4-amino-2,4,6-trideoxy-D-glucose. The sequence is that of dTDP-4-dehydro-2,3,6-trideoxy-D-glucose 4-aminotransferase from Saccharopolyspora spinosa.